A 306-amino-acid chain; its full sequence is D-alanine--D-alanine ligase (306 aa).

The region spanning 101-303 is the ATP-grasp domain; sequence KQVWQGIGLT…FSQLVVKILE (203 aa). ATP is bound at residue 134–189; the sequence is VADLGLPLIVKPSLEGSSVGMTKVNEISELRGALEAAFRYDVDLLVEKWLHGPEYT. Residues aspartate 257, glutamate 270, and asparagine 272 each contribute to the Mg(2+) site.

It belongs to the D-alanine--D-alanine ligase family. The cofactor is Mg(2+). Mn(2+) is required as a cofactor.

The protein resides in the cytoplasm. It carries out the reaction 2 D-alanine + ATP = D-alanyl-D-alanine + ADP + phosphate + H(+). It functions in the pathway cell wall biogenesis; peptidoglycan biosynthesis. Its function is as follows. Cell wall formation. This Photorhabdus laumondii subsp. laumondii (strain DSM 15139 / CIP 105565 / TT01) (Photorhabdus luminescens subsp. laumondii) protein is D-alanine--D-alanine ligase.